Reading from the N-terminus, the 82-residue chain is Small ribosomal subunit protein bS16 (82 aa).

It belongs to the bacterial ribosomal protein bS16 family.

This is Small ribosomal subunit protein bS16 from Synechococcus elongatus (strain ATCC 33912 / PCC 7942 / FACHB-805) (Anacystis nidulans R2).